Consider the following 735-residue polypeptide: DNA replication licensing factor mcm5-B (735 aa).

One can recognise an MCM domain in the interval 332–538 (IYETVAKSIA…RDMTLAKHVM (207 aa)). Residue Arg-372 coordinates ADP. The Arginine finger signature appears at 513-516 (SRFD).

This sequence belongs to the MCM family. In terms of assembly, component of the mcm2-7 complex (RLF-M). The complex forms a toroidal hexameric ring with the proposed subunit order mcm2-mcm6-mcm4-mcm7-mcm3-mcm5. The heterodimer of mmcm3/mcm5 interacts with mcm4, mmcm6, mcm7 and weakly with mcm2. Component of the CMG helicase complex, composed of the mcm2-7 complex, the GINS complex and cdc45.

It is found in the nucleus. Its subcellular location is the chromosome. The enzyme catalyses ATP + H2O = ADP + phosphate + H(+). In terms of biological role, acts as a component of the MCM2-7 complex (MCM complex) which is the replicative helicase essential for 'once per cell cycle' DNA replication initiation and elongation in eukaryotic cells. Core component of CDC45-MCM-GINS (CMG) helicase, the molecular machine that unwinds template DNA during replication, and around which the replisome is built. The active ATPase sites in the MCM2-7 ring are formed through the interaction surfaces of two neighboring subunits such that a critical structure of a conserved arginine finger motif is provided in trans relative to the ATP-binding site of the Walker A box of the adjacent subunit. The six ATPase active sites, however, are likely to contribute differentially to the complex helicase activity. The protein is DNA replication licensing factor mcm5-B (mcm5-b) of Xenopus laevis (African clawed frog).